Here is a 169-residue protein sequence, read N- to C-terminus: Peptide deformylase (169 aa).

Fe cation contacts are provided by Cys-91 and His-133. The active site involves Glu-134. Residue His-137 participates in Fe cation binding.

This sequence belongs to the polypeptide deformylase family. The cofactor is Fe(2+).

The enzyme catalyses N-terminal N-formyl-L-methionyl-[peptide] + H2O = N-terminal L-methionyl-[peptide] + formate. Its function is as follows. Removes the formyl group from the N-terminal Met of newly synthesized proteins. Requires at least a dipeptide for an efficient rate of reaction. N-terminal L-methionine is a prerequisite for activity but the enzyme has broad specificity at other positions. The chain is Peptide deformylase from Escherichia coli (strain K12 / DH10B).